A 108-amino-acid polypeptide reads, in one-letter code: Insulin (108 aa).

The first 24 residues, 1–24, serve as a signal peptide directing secretion; that stretch reads MALWTRLLPLLALLALWAPAPAQA. Cystine bridges form between C31/C94, C43/C107, and C93/C98. Residues 57–85 constitute a propeptide, c peptide; the sequence is EAENPQAGAVELGGGLGGLQALALEGPPQ.

This sequence belongs to the insulin family. As to quaternary structure, heterodimer of a B chain and an A chain linked by two disulfide bonds.

It localises to the secreted. Insulin decreases blood glucose concentration. It increases cell permeability to monosaccharides, amino acids and fatty acids. It accelerates glycolysis, the pentose phosphate cycle, and glycogen synthesis in liver. In Sus scrofa (Pig), this protein is Insulin (INS).